The following is a 68-amino-acid chain: Alpha-conotoxin Lp1.1 (68 aa).

An N-terminal signal peptide occupies residues 1 to 21 (MGMRMMFIMFMLVVLATTVVT). A propeptide spanning residues 22 to 48 (FTSDRALDAMNAAASNKASRLIALAVR) is cleaved from the precursor. Intrachain disulfides connect Cys50/Cys56 and Cys51/Cys64. The interval 52–54 (ARA) is lacks the Ser-Xaa-Pro motif that is crucial for potent interaction with nAChR. Glycine amide is present on Gly65. Positions 66–68 (GGR) are excised as a propeptide.

This sequence belongs to the conotoxin A superfamily. In terms of tissue distribution, expressed by the venom duct.

It localises to the secreted. Alpha-conotoxins act on postsynaptic membranes, they bind to the nicotinic acetylcholine receptors (nAChR) and thus inhibit them. Synthetic peptide inhibits alpha-6/alpha-3/beta-2 and alpha-3/beta-2 nicotinic acetylcholine receptors and causes uncoordinated movement when intramuscularly injected into goldfish. Has a distinct nAChR binding mode from other alpha-conotoxins, due to a different three residue motif (Ala-Xaa-Ala instead of the conserved Ser-Xaa-Pro motif). The polypeptide is Alpha-conotoxin Lp1.1 (Conus leopardus (Leopard cone)).